The primary structure comprises 61 residues: Outer membrane lipoprotein YnbE (61 aa).

Residues 1–16 form the signal peptide; the sequence is MKILLAALTSSFMLVG. Cysteine 17 carries N-palmitoyl cysteine lipidation. Cysteine 17 is lipidated: S-diacylglycerol cysteine.

Belongs to the lipoprotein YnbE family. In terms of assembly, interacts with the C-terminal region of the probable phospholipid transport protein YdbH.

The protein localises to the cell outer membrane. Involved in outer membrane lipid homeostasis. Interacts with the inner membrane protein YdbH to form a functional protein bridge connecting the inner and outer membranes of the cell. Is required for YdbH's function and may facilitate phospholipid transport through the periplasm. This chain is Outer membrane lipoprotein YnbE (ynbE), found in Escherichia coli O6:H1 (strain CFT073 / ATCC 700928 / UPEC).